The chain runs to 442 residues: Microfibrillar-associated protein 1 (442 aa).

Disordered stretches follow at residues methionine 1–glycine 34 and glutamate 113–lysine 203. Composition is skewed to acidic residues over residues aspartate 134–isoleucine 148 and glutamate 181–methionine 198.

Belongs to the MFAP1 family. As to quaternary structure, component of the spliceosome B complex. Interacts with PRPF38A (via N-terminal interaction domain). Widely expressed.

It is found in the nucleus. In terms of biological role, involved in pre-mRNA splicing as a component of the spliceosome. This is Microfibrillar-associated protein 1 from Gallus gallus (Chicken).